The sequence spans 366 residues: Alcohol dehydrogenase (366 aa).

Zn(2+)-binding residues include C41, H62, E63, and D167.

Belongs to the zinc-containing alcohol dehydrogenase family. As to quaternary structure, homotetramer. Requires Zn(2+) as cofactor.

It catalyses the reaction a primary alcohol + NAD(+) = an aldehyde + NADH + H(+). It carries out the reaction a secondary alcohol + NAD(+) = a ketone + NADH + H(+). The enzyme catalyses (R,R)-butane-2,3-diol + NAD(+) = (R)-acetoin + NADH + H(+). The catalysed reaction is an aldehyde + NAD(+) + H2O = a carboxylate + NADH + 2 H(+). In terms of biological role, multifunctional alcohol dehydrogenase exhibiting NAD(+)-dependent dehydrogenase activities for 2,3-butanediol, ethanol and acetaldehyde, and reductase activities for acetoin (NADH-dependent), and diacetyl and acetaldehyde (independently of whether NADH or NADPH is the reductant). The rate of oxidation of 2,3-butanediol is much higher than for the oxidation of ethanol. Has acetaldehyde dehydrogenase activity leading to acetate formation. May function in the release of excess reducing power in the absence of exogenous hydrogen acceptors such as oxygen. The chain is Alcohol dehydrogenase (adh) from Cupriavidus necator (strain ATCC 17699 / DSM 428 / KCTC 22496 / NCIMB 10442 / H16 / Stanier 337) (Ralstonia eutropha).